We begin with the raw amino-acid sequence, 621 residues long: MTLDISKYPTLALANTPEELRLLPKETLPTLCDELRTYLLNSVSQSSGHLASGLGTVELTVALHYVYNTPVDQLIWDVGHQAYPHKILTGRRDQMPTIRQKDGLHPFPWREESEYDTLSVGHSSTSISAGLGMAISAQKEGEGRKVVSVIGDGAITAGMAFEAMNHAGDVHPDMLVILNDNEMSISENVGALNNHLAKVLSGSLYTSIREGGKKVLSGVPPIKELVRRTEEHLKGMVVPGTLFEELGFNYIGPIDGHDVNELVKTLKNMRELKGPQFLHIMTKKGKGYEPAEKDPIGYHAVPKFAPSNNSLPKSSGGKPNFSKIFGDFLCDMAAQDPKLMAITPAMREGSGMVRFSKEYPEQYFDVAIAEQHAVTLATGMAIAGDHPIVAIYSTFLQRGYDQLIHDVAIMDLPVMFAIDRAGLVGADGQTHQGAFDLSFMRCIPNMVIMAPSDENECRQMLYTGHKHTGPSAVRYPRGSGMGTDIEKDFTALEIGKGRIVRKGEKVAILSFGTFLGNALEAAENLNATVADMRFVKPLDEALIRQLAAEHDVLVTLEENAIAGGAGAGVIEFMMQDKIIKPVLNLGLPDRFVPQGTQDELHEDLGLDAKGIEKSINDYLAK.

Thiamine diphosphate contacts are provided by residues histidine 80 and 121–123; that span reads GHS. Position 152 (aspartate 152) interacts with Mg(2+). Thiamine diphosphate-binding positions include 153–154, asparagine 181, tyrosine 288, and glutamate 370; that span reads GA. A Mg(2+)-binding site is contributed by asparagine 181.

This sequence belongs to the transketolase family. DXPS subfamily. As to quaternary structure, homodimer. Mg(2+) serves as cofactor. Thiamine diphosphate is required as a cofactor.

The enzyme catalyses D-glyceraldehyde 3-phosphate + pyruvate + H(+) = 1-deoxy-D-xylulose 5-phosphate + CO2. Its pathway is metabolic intermediate biosynthesis; 1-deoxy-D-xylulose 5-phosphate biosynthesis; 1-deoxy-D-xylulose 5-phosphate from D-glyceraldehyde 3-phosphate and pyruvate: step 1/1. Catalyzes the acyloin condensation reaction between C atoms 2 and 3 of pyruvate and glyceraldehyde 3-phosphate to yield 1-deoxy-D-xylulose-5-phosphate (DXP). In Vibrio campbellii (strain ATCC BAA-1116), this protein is 1-deoxy-D-xylulose-5-phosphate synthase.